A 116-amino-acid chain; its full sequence is MDKKASRLRRATRTRKKLQELGATRLVINRTPRHTYAQVITADAQVVASASTLEKEVRAQISNGGNKEAAQLIGKLVAERAVEKGISKISFDRSGFQYHGRVAALAEAAREAGLQF.

The protein belongs to the universal ribosomal protein uL18 family. As to quaternary structure, part of the 50S ribosomal subunit; part of the 5S rRNA/L5/L18/L25 subcomplex. Contacts the 5S and 23S rRNAs.

Its function is as follows. This is one of the proteins that bind and probably mediate the attachment of the 5S RNA into the large ribosomal subunit, where it forms part of the central protuberance. This is Large ribosomal subunit protein uL18 from Psychromonas ingrahamii (strain DSM 17664 / CCUG 51855 / 37).